The chain runs to 1207 residues: DNA-directed RNA polymerase subunit beta' (1207 aa).

Zn(2+)-binding residues include C60, C62, C75, and C78. Mg(2+)-binding residues include D450, D452, and D454. Positions 819, 893, 900, and 903 each coordinate Zn(2+).

This sequence belongs to the RNA polymerase beta' chain family. As to quaternary structure, the RNAP catalytic core consists of 2 alpha, 1 beta, 1 beta' and 1 omega subunit. When a sigma factor is associated with the core the holoenzyme is formed, which can initiate transcription. Mg(2+) is required as a cofactor. The cofactor is Zn(2+).

The catalysed reaction is RNA(n) + a ribonucleoside 5'-triphosphate = RNA(n+1) + diphosphate. Its function is as follows. DNA-dependent RNA polymerase catalyzes the transcription of DNA into RNA using the four ribonucleoside triphosphates as substrates. This is DNA-directed RNA polymerase subunit beta' from Streptococcus pyogenes serotype M12 (strain MGAS2096).